The primary structure comprises 95 residues: Small ribosomal subunit protein bS18 (95 aa).

This sequence belongs to the bacterial ribosomal protein bS18 family. In terms of assembly, part of the 30S ribosomal subunit. Forms a tight heterodimer with protein bS6.

In terms of biological role, binds as a heterodimer with protein bS6 to the central domain of the 16S rRNA, where it helps stabilize the platform of the 30S subunit. The sequence is that of Small ribosomal subunit protein bS18 from Ehrlichia ruminantium (strain Gardel).